The chain runs to 462 residues: Asparagine--tRNA ligase (462 aa).

This sequence belongs to the class-II aminoacyl-tRNA synthetase family. Homodimer.

Its subcellular location is the cytoplasm. It carries out the reaction tRNA(Asn) + L-asparagine + ATP = L-asparaginyl-tRNA(Asn) + AMP + diphosphate + H(+). The protein is Asparagine--tRNA ligase of Borreliella afzelii (strain PKo) (Borrelia afzelii).